A 585-amino-acid chain; its full sequence is Arginine--tRNA ligase (585 aa).

Residues 131-141 (ANPTGPMHVGH) carry the 'HIGH' region motif.

The protein belongs to the class-I aminoacyl-tRNA synthetase family. In terms of assembly, monomer.

Its subcellular location is the cytoplasm. The enzyme catalyses tRNA(Arg) + L-arginine + ATP = L-arginyl-tRNA(Arg) + AMP + diphosphate. The sequence is that of Arginine--tRNA ligase from Sinorhizobium medicae (strain WSM419) (Ensifer medicae).